Reading from the N-terminus, the 572-residue chain is Probable D-xylulose kinase A (572 aa).

Substrate-binding residues include His95, Arg166, Asp282, and Asn283. ATP is bound by residues Trp365, 470–471 (GG), and Asn474.

Belongs to the FGGY kinase family.

The protein localises to the cytoplasm. The catalysed reaction is D-xylulose + ATP = D-xylulose 5-phosphate + ADP + H(+). In terms of biological role, highly specific D-xylulose kinase which participates in the catabolism of xylose. Xylose is a major component of hemicelluloses such as xylan. Most fungi utilize D-xylose via three enzymatic reactions, xylose reductase (XR), xylitol dehydrogenase (XDH), and xylulokinase, to form xylulose 5-phosphate, which enters pentose phosphate pathway. The protein is Probable D-xylulose kinase A (xkiA) of Aspergillus oryzae (strain ATCC 42149 / RIB 40) (Yellow koji mold).